The sequence spans 483 residues: tRNA sulfurtransferase (483 aa).

The THUMP domain maps to 62 to 166 (PQICDALTRV…QDKLTLIKAR (105 aa)). ATP-binding positions include 184-185 (LI), Lys266, Gly288, and Gln297. Cys345 and Cys457 are oxidised to a cystine. Positions 405 to 483 (LADTDVLLDI…GYTNVKVYRP (79 aa)) constitute a Rhodanese domain. The Cysteine persulfide intermediate role is filled by Cys457.

This sequence belongs to the ThiI family.

The protein resides in the cytoplasm. The enzyme catalyses [ThiI sulfur-carrier protein]-S-sulfanyl-L-cysteine + a uridine in tRNA + 2 reduced [2Fe-2S]-[ferredoxin] + ATP + H(+) = [ThiI sulfur-carrier protein]-L-cysteine + a 4-thiouridine in tRNA + 2 oxidized [2Fe-2S]-[ferredoxin] + AMP + diphosphate. It carries out the reaction [ThiS sulfur-carrier protein]-C-terminal Gly-Gly-AMP + S-sulfanyl-L-cysteinyl-[cysteine desulfurase] + AH2 = [ThiS sulfur-carrier protein]-C-terminal-Gly-aminoethanethioate + L-cysteinyl-[cysteine desulfurase] + A + AMP + 2 H(+). The protein operates within cofactor biosynthesis; thiamine diphosphate biosynthesis. In terms of biological role, catalyzes the ATP-dependent transfer of a sulfur to tRNA to produce 4-thiouridine in position 8 of tRNAs, which functions as a near-UV photosensor. Also catalyzes the transfer of sulfur to the sulfur carrier protein ThiS, forming ThiS-thiocarboxylate. This is a step in the synthesis of thiazole, in the thiamine biosynthesis pathway. The sulfur is donated as persulfide by IscS. The sequence is that of tRNA sulfurtransferase from Yersinia enterocolitica serotype O:8 / biotype 1B (strain NCTC 13174 / 8081).